The chain runs to 289 residues: Probable endonuclease 4 (289 aa).

Positions 74, 115, 150, 184, 187, 218, 231, 233, and 263 each coordinate Zn(2+).

It belongs to the AP endonuclease 2 family. Requires Zn(2+) as cofactor.

The enzyme catalyses Endonucleolytic cleavage to 5'-phosphooligonucleotide end-products.. Endonuclease IV plays a role in DNA repair. It cleaves phosphodiester bonds at apurinic or apyrimidinic (AP) sites, generating a 3'-hydroxyl group and a 5'-terminal sugar phosphate. This Mycoplasma mycoides subsp. mycoides SC (strain CCUG 32753 / NCTC 10114 / PG1) protein is Probable endonuclease 4.